The following is a 115-amino-acid chain: NADH-ubiquinone oxidoreductase chain 3 (115 aa).

The next 3 membrane-spanning stretches (helical) occupy residues 3–23, 55–75, and 84–104; these read LMIT…IAFW, FFLV…LLPL, and LNTM…SLAY.

The protein belongs to the complex I subunit 3 family. As to quaternary structure, core subunit of respiratory chain NADH dehydrogenase (Complex I) which is composed of 45 different subunits. Interacts with TMEM186. Interacts with TMEM242.

The protein resides in the mitochondrion inner membrane. It catalyses the reaction a ubiquinone + NADH + 5 H(+)(in) = a ubiquinol + NAD(+) + 4 H(+)(out). Functionally, core subunit of the mitochondrial membrane respiratory chain NADH dehydrogenase (Complex I) which catalyzes electron transfer from NADH through the respiratory chain, using ubiquinone as an electron acceptor. Essential for the catalytic activity of complex I. This Ovis aries (Sheep) protein is NADH-ubiquinone oxidoreductase chain 3.